We begin with the raw amino-acid sequence, 125 residues long: Small ribosomal subunit protein eS8 (125 aa).

Positions 1–34 are disordered; sequence MQWQGRSVRKSTGGRYSPSRGKRRREIGSAPAET.

It belongs to the eukaryotic ribosomal protein eS8 family. As to quaternary structure, part of the 30S ribosomal subunit.

The sequence is that of Small ribosomal subunit protein eS8 from Methanospirillum hungatei JF-1 (strain ATCC 27890 / DSM 864 / NBRC 100397 / JF-1).